The following is a 61-amino-acid chain: 2S seed storage albumin protein (61 aa).

It belongs to the 2S seed storage albumins family. As to quaternary structure, the mature protein consists of a small and a large chain linked by 2 disulfide bonds.

Functionally, this is a 2S seed storage protein. Inhibits cell-free protein synthesis. This is 2S seed storage albumin protein from Cucurbita moschata (Winter crookneck squash).